The primary structure comprises 348 residues: Interferon regulatory factor 2 (348 aa).

A DNA-binding region (IRF tryptophan pentad repeat) is located at residues 5–113; that stretch reads RMRMRPWLEE…NAFRVYRMLP (109 aa). N6-acetyllysine occurs at positions 75 and 78. The tract at residues 117-137 is disordered; that stretch reads RPSKKGKKTKSEKDDKFKQIK. The segment covering 125–137 has biased composition (basic and acidic residues); it reads TKSEKDDKFKQIK. Residues K137, K164, and K291 each participate in a glycyl lysine isopeptide (Lys-Gly) (interchain with G-Cter in SUMO) cross-link. The disordered stretch occupies residues 311–348; that stretch reads LPQVVSTASTSSSRPDRETRASVIKKTSDITQSRVKSC. Polar residues-rich tracts occupy residues 314–323 and 339–348; these read VVSTASTSSS and DITQSRVKSC.

The protein belongs to the IRF family. As to quaternary structure, interacts with CREBBP in growing cells; the interaction acetylates IRF2 and regulates IRF2-dependent H4 promoter activity.

The protein resides in the nucleus. Specifically binds to the upstream regulatory region of type I IFN and IFN-inducible MHC class I genes (the interferon consensus sequence (ICS)) and represses those genes. Also acts as an activator for several genes including H4 and IL7. Constitutively binds to the ISRE promoter to activate IL7. Involved in cell cycle regulation through binding the site II (HiNF-M) promoter region of H4 and activating transcription during cell growth. Antagonizes IRF1 transcriptional activation. In Gallus gallus (Chicken), this protein is Interferon regulatory factor 2 (IRF2).